We begin with the raw amino-acid sequence, 1029 residues long: Chitin synthase 3 (1029 aa).

Residues 1-29 (MAYYSRPASAGAARAQDDQDPYPYYPDPD) are disordered. N37 carries an N-linked (GlcNAc...) asparagine glycan. Low complexity predominate over residues 46 to 71 (ASGAASSASHTSPFSDAHAASASPAS). Disordered stretches follow at residues 46–105 (ASGA…SRMP) and 168–209 (LAHR…AGTS). Positions 76–91 (SHQQVSAHAPQQQHMS) are enriched in polar residues. Over residues 191-202 (AHDEKYAYDRPD) the composition is skewed to basic and acidic residues. N-linked (GlcNAc...) asparagine glycosylation is found at N401, N514, N527, and N689. The next 7 helical transmembrane spans lie at 723–743 (FYSF…YIFF), 760–780 (IGVF…SSFI), 796–816 (AAVV…VLCL), 830–850 (AQMV…SLLA), 860–880 (FLQY…YAFC), 963–983 (VVLA…NGDA), and 998–1018 (VYMV…FIGS).

This sequence belongs to the chitin synthase family. Class I subfamily.

The protein resides in the cell membrane. The protein localises to the cytoplasmic vesicle membrane. The enzyme catalyses [(1-&gt;4)-N-acetyl-beta-D-glucosaminyl](n) + UDP-N-acetyl-alpha-D-glucosamine = [(1-&gt;4)-N-acetyl-beta-D-glucosaminyl](n+1) + UDP + H(+). Polymerizes chitin, a structural polymer of the cell wall and septum, by transferring the sugar moiety of UDP-GlcNAc to the non-reducing end of the growing chitin polymer. The polypeptide is Chitin synthase 3 (Mycosarcoma maydis (Corn smut fungus)).